Consider the following 368-residue polypeptide: Guanylate binding protein 128up (368 aa).

Lys22 is subject to (3S)-3-hydroxylysine. Positions 65–290 (ARVGFVGFPS…LLELMWEYLR (226 aa)) constitute an OBG-type G domain. Residues 71–78 (GFPSVGKS), 117–121 (DLPGI), and 248–251 (NKID) each bind GTP. The 77-residue stretch at 290 to 366 (RLQRIYTKPK…NDEDVVQIVK (77 aa)) folds into the TGS domain.

It belongs to the TRAFAC class OBG-HflX-like GTPase superfamily. OBG GTPase family. In terms of processing, hydroxylated (with S stereochemistry) at C-3 of Lys-22 by JMJD7. Expressed in posterior-lateral epidermis of the maxillary lobe.

Catalyzes the conversion of GTP to GDP through hydrolysis of the gamma-phosphate bond in GTP. Dfd/deformed is required to activate 128up in maxillary segment cells. The chain is Guanylate binding protein 128up from Drosophila melanogaster (Fruit fly).